Consider the following 272-residue polypeptide: ATP synthase subunit a (272 aa).

Helical transmembrane passes span 42 to 62, 108 to 128, 140 to 162, 177 to 197, 219 to 239, and 241 to 261; these read IDSLFFSVLLCLLFLVIAGFV, FVWIILMNSMDLIPIDLLPCI, ILPSADINITCAMALNIFALMIF, LIYHPFNYSLCIPINFLLEII, LIFILIAGFLPWWSQWMLSVP, and AIFHILIIILQAFIFMVLTII.

This sequence belongs to the ATPase A chain family. In terms of assembly, F-type ATPases have 2 components, CF(1) - the catalytic core - and CF(0) - the membrane proton channel. CF(1) has five subunits: alpha(3), beta(3), gamma(1), delta(1), epsilon(1). CF(0) has three main subunits: a(1), b(2) and c(9-12). The alpha and beta chains form an alternating ring which encloses part of the gamma chain. CF(1) is attached to CF(0) by a central stalk formed by the gamma and epsilon chains, while a peripheral stalk is formed by the delta and b chains.

The protein resides in the cell inner membrane. Key component of the proton channel; it plays a direct role in the translocation of protons across the membrane. In Blochmanniella floridana, this protein is ATP synthase subunit a.